The chain runs to 256 residues: Hypodermin-A (256 aa).

Residues 1–22 (MLKFVILLCSIAYVFGAVVPLG) form the signal peptide. A propeptide spans 23-30 (MLSQSDGR) (activation peptide). The Peptidase S1 domain maps to 31 to 254 (IVGGVESKIE…VRSLIVSNAE (224 aa)). Cys56 and Cys72 are joined by a disulfide. Residues His71 and Asp116 each act as charge relay system in the active site. 2 cysteine pairs are disulfide-bonded: Cys180–Cys197 and Cys206–Cys230. Ser210 (charge relay system) is an active-site residue.

Belongs to the peptidase S1 family.

The protein localises to the secreted. Specificity, limited to carboxyl side of arginine residue in B-chain of insulin. This is Hypodermin-A from Hypoderma lineatum (Early cattle grub).